The primary structure comprises 365 residues: Cobalt-precorrin-5B C(1)-methyltransferase (365 aa).

It belongs to the CbiD family.

It catalyses the reaction Co-precorrin-5B + S-adenosyl-L-methionine = Co-precorrin-6A + S-adenosyl-L-homocysteine. The protein operates within cofactor biosynthesis; adenosylcobalamin biosynthesis; cob(II)yrinate a,c-diamide from sirohydrochlorin (anaerobic route): step 6/10. Catalyzes the methylation of C-1 in cobalt-precorrin-5B to form cobalt-precorrin-6A. The protein is Cobalt-precorrin-5B C(1)-methyltransferase of Methanococcus maripaludis (strain C6 / ATCC BAA-1332).